The sequence spans 80 residues: Acyl carrier protein (80 aa).

The Carrier domain maps to 4–79 (EAILEKVRSI…DAVKYIEDKQ (76 aa)). Serine 39 carries the post-translational modification O-(pantetheine 4'-phosphoryl)serine.

Belongs to the acyl carrier protein (ACP) family. 4'-phosphopantetheine is transferred from CoA to a specific serine of apo-ACP by AcpS. This modification is essential for activity because fatty acids are bound in thioester linkage to the sulfhydryl of the prosthetic group.

It is found in the cytoplasm. It participates in lipid metabolism; fatty acid biosynthesis. Carrier of the growing fatty acid chain in fatty acid biosynthesis. In Parasynechococcus marenigrum (strain WH8102), this protein is Acyl carrier protein.